The sequence spans 255 residues: Dehydrogenase/reductase SDR family member 11 (255 aa).

An N-terminal signal peptide occupies residues 1-23; that stretch reads MERWTGRVALVTGASVGIGAAVA. NADP(+) contacts are provided by residues 13-18, 38-39, glutamate 44, 65-66, and asparagine 92; these read GASVGI, RS, and DL. Positions 146 and 161 each coordinate substrate. NADP(+) is bound by residues tyrosine 161, lysine 165, 196–199, and lysine 203; that span reads VETG. The active-site Proton acceptor is tyrosine 161.

Belongs to the short-chain dehydrogenases/reductases (SDR) family.

The protein localises to the secreted. The enzyme catalyses a 3beta-hydroxysteroid + NADP(+) = a 3-oxosteroid + NADPH + H(+). The catalysed reaction is 17beta-estradiol + NAD(+) = estrone + NADH + H(+). It catalyses the reaction 17beta-estradiol + NADP(+) = estrone + NADPH + H(+). It participates in steroid biosynthesis; estrogen biosynthesis. Its activity is regulated as follows. Inhibited by flavonoids including apigenin, luteolin, genistein, kaempferol and quercetin and also by carbenoxolone, zearalenone, glycyrrhetinic, curcumin and flufenamic acid. Catalyzes the conversion of the 17-keto group of estrone, 4- and 5-androstenes and 5-alpha-androstanes into their 17-beta-hydroxyl metabolites and the conversion of the 3-keto group of 3-, 3,17- and 3,20- diketosteroids into their 3-hydroxyl metabolites. Exhibits reductive 3-beta-hydroxysteroid dehydrogenase activity toward 5-beta-androstanes, 5-beta-pregnanes, 4-pregnenes and bile acids. May also reduce endogenous and exogenous alpha-dicarbonyl compounds and xenobiotic alicyclic ketones. The polypeptide is Dehydrogenase/reductase SDR family member 11 (DHRS11) (Gallus gallus (Chicken)).